A 194-amino-acid polypeptide reads, in one-letter code: Peptidyl-tRNA hydrolase (194 aa).

Tyr-17 is a binding site for tRNA. Residue His-22 is the Proton acceptor of the active site. Tyr-68, Asn-70, and Asn-116 together coordinate tRNA.

This sequence belongs to the PTH family. Monomer.

It localises to the cytoplasm. It carries out the reaction an N-acyl-L-alpha-aminoacyl-tRNA + H2O = an N-acyl-L-amino acid + a tRNA + H(+). Hydrolyzes ribosome-free peptidyl-tRNAs (with 1 or more amino acids incorporated), which drop off the ribosome during protein synthesis, or as a result of ribosome stalling. Its function is as follows. Catalyzes the release of premature peptidyl moieties from peptidyl-tRNA molecules trapped in stalled 50S ribosomal subunits, and thus maintains levels of free tRNAs and 50S ribosomes. The protein is Peptidyl-tRNA hydrolase of Azotobacter vinelandii (strain DJ / ATCC BAA-1303).